The sequence spans 229 residues: Sorting nexin-10A (229 aa).

The PX domain occupies 11 to 128 (FISVWVRDPQ…HLFLQSQLSI (118 aa)). A 1,2-diacyl-sn-glycero-3-phospho-(1D-myo-inositol-3-phosphate) contacts are provided by Arg-54 and Arg-95.

This sequence belongs to the sorting nexin family.

It is found in the cytoplasm. It localises to the endosome membrane. Its subcellular location is the cytoskeleton. The protein resides in the microtubule organizing center. The protein localises to the centrosome. In terms of biological role, probable phosphoinositide-binding protein involved in protein sorting and membrane trafficking in endosomes. May play a role in cilium biogenesis through regulation of the transport and the localization of proteins to the cilium. The chain is Sorting nexin-10A (snx10a) from Danio rerio (Zebrafish).